Consider the following 251-residue polypeptide: MRKPIIAGNWKMNKTLSEAQSFAEAVKNAVPSNDVVDAVIGSPALFLAPLAWNLKDSEVKLAAQNCYWENAGAFTGENSPAAIADLGVDYVIIGHSERREYFHETDEDINKKAKAIFANGMTPIFCCGETLETYEAGKTAEWIEGQITKGLVGLSNEQVASMVIAYEPIWAIGTGKSADANIADEICGVVRSTVEKLYGKEVSEAVRIQYGGSVKPENIAEYMAKENVDGALVGGASLEADSFLALLDAVK.

9-11 (NWK) lines the substrate pocket. The active-site Electrophile is the His-95. Residue Glu-167 is the Proton acceptor of the active site. Substrate is bound by residues Gly-173, Ser-213, and 234-235 (GG).

This sequence belongs to the triosephosphate isomerase family. Homodimer.

Its subcellular location is the cytoplasm. The catalysed reaction is D-glyceraldehyde 3-phosphate = dihydroxyacetone phosphate. Its pathway is carbohydrate biosynthesis; gluconeogenesis. The protein operates within carbohydrate degradation; glycolysis; D-glyceraldehyde 3-phosphate from glycerone phosphate: step 1/1. In terms of biological role, involved in the gluconeogenesis. Catalyzes stereospecifically the conversion of dihydroxyacetone phosphate (DHAP) to D-glyceraldehyde-3-phosphate (G3P). This chain is Triosephosphate isomerase, found in Enterococcus faecalis (strain ATCC 700802 / V583).